The primary structure comprises 390 residues: (S)-8-oxocitronellyl enol synthase CYC2 (390 aa).

Residues threonine 35–isoleucine 37, arginine 63–arginine 64, aspartate 81–isoleucine 82, threonine 105–tryptophan 106, and glutamine 143 contribute to the NADP(+) site. Catalysis depends on residues lysine 147 and tyrosine 179. Substrate is bound by residues lysine 147 and tyrosine 179. NADP(+) is bound by residues tyrosine 179 and serine 213 to methionine 215.

It belongs to the short-chain dehydrogenases/reductases (SDR) family. Highly divergent.

The enzyme catalyses (S)-8-oxocitronellyl enol + NADP(+) = (6E)-8-oxogeranial + NADPH + H(+). The catalysed reaction is (S)-8-oxocitronellyl enol + NAD(+) = (6E)-8-oxogeranial + NADH + H(+). Its function is as follows. Iridoid synthase that catalyzes the first step in generation of the iridoid ring scaffold using the linear monoterpene (6E)-8-oxogeranial as substrate. Iridoids comprise a large family of distinctive bicyclic monoterpenes that possess a wide range of pharmacological activities, including anticancer, anti-inflammatory, antifungal and antibacterial activities. The chain is (S)-8-oxocitronellyl enol synthase CYC2 from Camptotheca acuminata (Happy tree).